The sequence spans 742 residues: MIEPLQPGDPGRIGPYRLVSRLGAGGMGQVFLARSPGGRPVVVKVILPEYANDDEYRIRFAREVEAARRVGGFHTAQVIDADPTADPPWMATAYIPGPSLRKAVTERGPLYGNNLRTLAAGLVEGLAAIHACGLVHRDFKPSNIVLAADGPRVIDFGVARPLDSSVMTQSGAVIGTLAYMSPEQTDGSQVGPASDVFSLGTVLAFAATGRSPFMADSIGEIIARISGPPPELPELPDDLRELVYACWEQNPDLRPTTAELLAQLSTDHTGDDWPPPHLSDLIGSMLPLGATTSPNPSLAIEPPPPSHGPPRPSEPLPDPGDDADEPSAEKPSRTLPEPEPPELEEKPIQVIHEPERPAPTPPRPREPARGAIKPKNPRPAAPQPPWSPPRVQPPRWKQLITKKPVAGILTAVATAGLVVSFLVWQWTLPETPLRPDSSTAPSESADPHELNEPRILTTDREAVAVAFSPGGSLLAGGSGDKLIHVWDVASGDELHTLEGHTDWVRAVAFSPDGALLASGSDDATVRLWDVAAAEERAVFEGHTHYVLDIAFSPDGSMVASGSRDGTARLWNVATGTEHAVLKGHTDYVYAVAFSPDGSMVASGSRDGTIRLWDVATGKERDVLQAPAENVVSLAFSPDGSMLVHGSDSTVHLWDVASGEALHTFEGHTDWVRAVAFSPDGALLASGSDDRTIRLWDVAAQEEHTTLEGHTEPVHSVAFHPEGTTLASASEDGTIRIWPIATE.

The Protein kinase domain maps to 16 to 266; that stretch reads YRLVSRLGAG…TAELLAQLST (251 aa). ATP is bound by residues 22–30 and lysine 44; that span reads LGAGGMGQV. The Proton acceptor role is filled by aspartate 138. A disordered region spans residues 266–394; the sequence is TDHTGDDWPP…PWSPPRVQPP (129 aa). Residues 301–318 are compositionally biased toward pro residues; the sequence is EPPPPSHGPPRPSEPLPD. Over residues 343-356 the composition is skewed to basic and acidic residues; sequence LEEKPIQVIHEPER. The span at 377 to 392 shows a compositional bias: pro residues; it reads PRPAAPQPPWSPPRVQ. WD repeat units lie at residues 455–496, 497–538, 539–580, 581–621, 622–663, 664–705, and 706–742; these read ILTT…ELHT, LEGH…ERAV, FEGH…EHAV, LKGH…KERD, VLQA…ALHT, FEGH…EHTT, and LEGH…IATE.

It belongs to the protein kinase superfamily. Ser/Thr protein kinase family.

It catalyses the reaction L-seryl-[protein] + ATP = O-phospho-L-seryl-[protein] + ADP + H(+). The catalysed reaction is L-threonyl-[protein] + ATP = O-phospho-L-threonyl-[protein] + ADP + H(+). Its function is as follows. May play a regulatory role during the complex growth cycle and in secondary metabolite production. The sequence is that of Probable serine/threonine-protein kinase PkwA (pkwA) from Thermomonospora curvata.